The primary structure comprises 204 residues: Proteasome subunit beta type-2-A (204 aa).

Residue methionine 1 is modified to N-acetylmethionine.

This sequence belongs to the peptidase T1B family. In terms of assembly, component of the 20S core complex of the 26S proteasome. The 26S proteasome is composed of a core protease (CP), known as the 20S proteasome, capped at one or both ends by the 19S regulatory particle (RP/PA700). The 20S proteasome core is composed of 28 subunits that are arranged in four stacked rings, resulting in a barrel-shaped structure. The two end rings are each formed by seven alpha subunits, and the two central rings are each formed by seven beta subunits. The catalytic chamber with the active sites is on the inside of the barrel.

The protein resides in the cytoplasm. It is found in the nucleus. Functionally, non-catalytic component of the proteasome, a multicatalytic proteinase complex which is characterized by its ability to cleave peptides with Arg, Phe, Tyr, Leu, and Glu adjacent to the leaving group at neutral or slightly basic pH. The proteasome has an ATP-dependent proteolytic activity. In Arabidopsis thaliana (Mouse-ear cress), this protein is Proteasome subunit beta type-2-A (PBD1).